Reading from the N-terminus, the 160-residue chain is Major pollen allergen Bet v 1-J (160 aa).

Residues Lys-55, Tyr-82, Tyr-84, and Asn-101 each contribute to the brassinolide site. Hydrophobic ligand pocket stretches follow at residues 116–118 (KIN) and 133–141 (QIKASKEMG).

The protein belongs to the BetVI family. In terms of tissue distribution, pollen.

It localises to the cytoplasm. Functionally, may be a general steroid carrier protein. This Betula pendula (European white birch) protein is Major pollen allergen Bet v 1-J.